A 1391-amino-acid polypeptide reads, in one-letter code: Axoneme-associated protein mst101(2) (1391 aa).

Disordered stretches follow at residues 170–213 (ECNQ…GKKL) and 280–300 (SSEPKKKGKKKKNDEKKEKEL). Basic residues predominate over residues 184-201 (TKKGKTKGKSGGGNKKRS). A compositionally biased stretch (basic and acidic residues) spans 291 to 300 (KNDEKKEKEL). A run of 59 repeats spans residues 332 to 347 (KKKCKDLGRKMKEEAE), 348 to 363 (KKKCAALAKKQKEEDE), 364 to 379 (KKACKELAKKKKEADE), 380 to 395 (KKKCEEAANKEKKAAE), 396 to 411 (KKKCEKAAKERKEAAE), 412 to 427 (KKKCEEAAKKEKEAAE), 428 to 443 (RKKCEELAKNIKKAAE), 444 to 459 (KKKCKEAAKKEKEAAE), 460 to 475 (RKKCEELAKKIKKAAE), 476 to 491 (KKKCEETAKKGKEVAE), 492 to 507 (RKKCEELAKKIKKAEI), 508 to 523 (KKKCKKLAKKEKETAE), 524 to 539 (KKKCEKAAKKRKEAAE), 540 to 555 (KKKCEKAAKKRKEAAE), 556 to 571 (KKKCEKSAKKRKEAAE), 572 to 587 (KKKCEKAAKERKEAAE), 588 to 603 (KKKCEEAAKKEKEVAE), 604 to 619 (RKKCEELAKKIKKAAE), 620 to 635 (KKKCKEAAKKEKEAAE), 636 to 651 (REKCGELAKKIKKAAE), 652 to 667 (KKKCKKLAKKEKETAE), 668 to 683 (KKKCEKAAKKRKEAAE), 684 to 699 (KKKCAEAAKKEKEAAE), 700 to 715 (KKKCEEAAKKEKEAAE), 716 to 731 (RKKCEELAKKIKKAAE), 732 to 747 (KKKCKKLAKKKKAGEK), 748 to 763 (NKLKKGNKKGKKALKE), 764 to 779 (KKKCRELAKKKAAEKK), 780 to 795 (KCKEAAKKEKEAAEKK), 796 to 811 (KCEKTAKKRKEEAEKK), 812 to 827 (KCEKTAKKRKEAAEKK), 828 to 843 (KCEKAAKKRKEEAEKK), 844 to 859 (KCEKTAKKRKETAEKK), 860 to 875 (KCEKAAKKRKQAAEKK), 876 to 891 (KCEKAAKKRKEAAEKK), 892 to 907 (KCAEAAKKEKELAEKK), 908 to 923 (KCEEAAKKEKEVAERK), 924 to 939 (KCEELAKKIKKAAEKK), 940 to 955 (KCKKLAKKEKKAGEKN), 956 to 971 (KLKKKAGKGKKKCKKL), 972 to 987 (GKKSKRAAEKKKCAEA), 988 to 1003 (AKKEKEAATKKKCEER), 1004 to 1019 (AKKQKEAAEKKQCEER), 1020 to 1035 (AKKLKEAAEQKQCEER), 1036 to 1051 (AKKLKEAAEKKQCEER), 1052 to 1067 (AKKLKEAAEQKQCEER), 1068 to 1083 (AKKLKEAAEKKQCEER), 1084 to 1099 (AKKEKEAAEKKQCEER), 1100 to 1115 (AKKLKEAAEKKQCEER), 1116 to 1131 (AKKEKEAAEKKRCEEA), 1132 to 1147 (AKREKEAAEKKKCAEA), 1148 to 1163 (AKKEKEATEKQKCAEA), 1164 to 1179 (AKKEKEAAEKKKCAEA), 1180 to 1195 (AKREKEAAQKKKCADL), 1196 to 1211 (AKKEQEPAEMKKCEEA), 1212 to 1227 (AKKEKEAAEKQKCAKA), 1228 to 1243 (AKKEKEAAEKKKCAEA), 1244 to 1259 (AKKEQEAAEKKKCAEA), and 1260 to 1275 (AKKEKEAEKKRKCEKA). Residues 332–1275 (KKKCKDLGRK…AEKKRKCEKA (944 aa)) form a 59 X 16 AA approximate tandem repeats of [KR]-K-X-C-X-X-X-A-K-X-X-K-X-X-X-E region. The interval 370–429 (LAKKKKEADEKKKCEEAANKEKKAAEKKKCEKAAKERKEAAEKKKCEEAAKKEKEAAERK) is disordered. The disordered stretch occupies residues 516-577 (KKEKETAEKK…EAAEKKKCEK (62 aa)). The span at 517-577 (KEKETAEKKK…EAAEKKKCEK (61 aa)) shows a compositional bias: basic and acidic residues. Residues 729-765 (AAEKKKCKKLAKKKKAGEKNKLKKGNKKGKKALKEKK) are compositionally biased toward basic residues. Disordered regions lie at residues 729-881 (AAEK…EKAA), 900-922 (EKELAEKKKCEEAAKKEKEVAER), and 934-1013 (KAAE…AAEK). A compositionally biased stretch (basic and acidic residues) spans 766–881 (KCRELAKKKA…AEKKKCEKAA (116 aa)). Basic residues-rich tracts occupy residues 934-949 (KAAEKKKCKKLAKKEK) and 956-976 (KLKKKAGKGKKKCKKLGKKSK). Positions 977 to 1013 (RAAEKKKCAEAAKKEKEAATKKKCEERAKKQKEAAEK) are enriched in basic and acidic residues. Disordered regions lie at residues 1076–1095 (EKKQCEERAKKEKEAAEKKQ) and 1104–1212 (KEAA…EEAA). Residues 1353-1370 (KKEKEAAEKKKRCKDLAK) show a composition bias toward basic and acidic residues. Residues 1353–1391 (KKEKEAAEKKKRCKDLAKNKKKGHKKKGRNENRKKRTDC) form a disordered region. The span at 1371–1391 (NKKKGHKKKGRNENRKKRTDC) shows a compositional bias: basic residues.

Testis. Primary spermatocytes and early spermatids.

It localises to the cytoplasm. Possible structural role in the sperm tail. The chain is Axoneme-associated protein mst101(2) (mst101(2)) from Drosophila hydei (Fruit fly).